Reading from the N-terminus, the 290-residue chain is Zinc-finger homeodomain protein 2 (290 aa).

Positions 1–15 are enriched in acidic residues; the sequence is MDFDDHDEGDGDEEM. The tract at residues 1 to 59 is disordered; it reads MDFDDHDEGDGDEEMPPMPLSSGYDAPMQPGLGGGGGGVPKPGGGVGGGGGGGGGGGGG. The segment covering 31 to 59 has biased composition (gly residues); that stretch reads GLGGGGGGVPKPGGGVGGGGGGGGGGGGG. The ZF-HD dimerization-type; degenerate zinc-finger motif lies at 63-112; that stretch reads YRECLKNHAVGIGGHAVDGCGEFMASGEEGSIDALRCAACGCHRNFHRKE. The segment at residues 226-289 is a DNA-binding region (homeobox); it reads KKRFRTKFTQ…NNKHTLGKKA (64 aa).

Homo- and heterodimer with other ZFHD proteins.

It is found in the nucleus. In terms of biological role, putative transcription factor. The protein is Zinc-finger homeodomain protein 2 (ZHD2) of Oryza sativa subsp. japonica (Rice).